A 319-amino-acid chain; its full sequence is G-protein coupled receptor 55 (319 aa).

Residues 1-21 (MSQQNTSGDCLFDGVNELMKT) are Extracellular-facing. The N-linked (GlcNAc...) asparagine glycan is linked to Asn-5. Residues 22-42 (LQFAVHIPTFVLGLLLNLLAI) form a helical membrane-spanning segment. Residues 43 to 58 (HGFSTFLKNRWPDYAA) are Cytoplasmic-facing. A helical transmembrane segment spans residues 59–79 (TSIYMINLAVFDLLLVLSLPF). The Extracellular portion of the chain corresponds to 80–94 (KMVLSQVQSPFPSLC). The helical transmembrane segment at 95–115 (TLVECLYFVSMYGSVFTICFI) threads the bilayer. Topologically, residues 116-137 (SMDRFLAIRYPLLVSHLRSPRK) are cytoplasmic. The helical transmembrane segment at 138-158 (IFGICCTIWVLVWTGSIPIYS) threads the bilayer. Residues 159–180 (FHGKVEKYMCFHNMSDDTWSAK) lie on the Extracellular side of the membrane. The N-linked (GlcNAc...) asparagine glycan is linked to Asn-171. Residues 181 to 201 (VFFPLEVFGFLLPMGIMGFCC) form a helical membrane-spanning segment. The Cytoplasmic portion of the chain corresponds to 202-231 (SRSIHILLGRRDHTQDWVQQKACIYSIAAS). A helical membrane pass occupies residues 232 to 252 (LAVFVVSFLPVHLGFFLQFLV). Topologically, residues 253–271 (RNSFIVECRAKQSISFFLQ) are extracellular. A helical membrane pass occupies residues 272–292 (LSMCFSNVNCCLDVFCYYFVI). The Cytoplasmic portion of the chain corresponds to 293–319 (KEFRMNIRAHRPSRVQLVLQDTTISRG).

It belongs to the G-protein coupled receptor 1 family. Expressed in the caudate nucleus and putamen, but not detected in the hippocampus, thalamus, pons cerebellum, frontal cortex of the brain or in the liver. Expressed in osteoclasts and osteoblasts. Higly expressed in macrophages and B-cells.

It localises to the cell membrane. G-protein coupled receptor that binds to several ligands including 2-arachidonoyl lysophosphatidylinositol or lysophosphatidylglucoside with high affinity, leading to rapid and transient activation of numerous intracellular signaling pathways. Induces the Ca(2+) release from intracellular stores via ERK, the heterotrimeric G protein GNA13 and RHOA leading to morphological changes including cell rounding and stress fiber formation. In macrophages, acts downstream of lysophosphatidylglucoside to inhibit the translocation of the phospholipid-transporting ABCA1 to plasma membrane and subsequent cholesterol efflux leading to lipid accumulation and foam cell formation. The polypeptide is G-protein coupled receptor 55 (GPR55) (Homo sapiens (Human)).